Reading from the N-terminus, the 381-residue chain is V-type proton ATPase subunit C 1-B (381 aa).

An N-acetylthreonine modification is found at T2.

This sequence belongs to the V-ATPase C subunit family. In terms of assembly, V-ATPase is a heteromultimeric enzyme made up of two complexes: the ATP-hydrolytic V1 complex and the proton translocation V0 complex. The V1 complex consists of three catalytic AB heterodimers that form a heterohexamer, three peripheral stalks each consisting of EG heterodimers, one central rotor including subunits D and F, and the regulatory subunits C and H. The proton translocation complex V0 consists of the proton transport subunit a, a ring of proteolipid subunits c9c'', rotary subunit d, subunits e and f, and two accessory subunits.

In terms of biological role, subunit of the V1 complex of vacuolar(H+)-ATPase (V-ATPase), a multisubunit enzyme composed of a peripheral complex (V1) that hydrolyzes ATP and a membrane integral complex (V0) that translocates protons. V-ATPase is responsible for acidifying and maintaining the pH of intracellular compartments and in some cell types, is targeted to the plasma membrane, where it is responsible for acidifying the extracellular environment. Subunit C is necessary for the assembly of the catalytic sector of the enzyme and is likely to have a specific function in its catalytic activity. The sequence is that of V-type proton ATPase subunit C 1-B (atp6v1c1b) from Danio rerio (Zebrafish).